The following is a 123-amino-acid chain: uncharacterized protein (123 aa).

The N-terminal stretch at 1-25 (MKHGIKALLITLSLACAGMSHSALA) is a signal peptide. The span at 40-53 (EAPAAQSKAAVPAK) shows a compositional bias: low complexity. Residues 40–62 (EAPAAQSKAAVPAKASDEEGTRV) form a disordered region. HhH domains lie at 60–90 (TRVS…IVSY) and 91–120 (REEY…NLAV).

This is an uncharacterized protein from Escherichia coli (strain K12).